We begin with the raw amino-acid sequence, 461 residues long: 3-isopropylmalate dehydratase large subunit (461 aa).

[4Fe-4S] cluster contacts are provided by Cys338, Cys398, and Cys401.

Belongs to the aconitase/IPM isomerase family. LeuC type 1 subfamily. As to quaternary structure, heterodimer of LeuC and LeuD. It depends on [4Fe-4S] cluster as a cofactor.

It catalyses the reaction (2R,3S)-3-isopropylmalate = (2S)-2-isopropylmalate. Its pathway is amino-acid biosynthesis; L-leucine biosynthesis; L-leucine from 3-methyl-2-oxobutanoate: step 2/4. Catalyzes the isomerization between 2-isopropylmalate and 3-isopropylmalate, via the formation of 2-isopropylmaleate. The sequence is that of 3-isopropylmalate dehydratase large subunit from Streptococcus mutans serotype c (strain ATCC 700610 / UA159).